A 297-amino-acid chain; its full sequence is tRNA pseudouridine synthase A (297 aa).

Catalysis depends on D72, which acts as the Nucleophile. Residue Y144 participates in substrate binding.

Belongs to the tRNA pseudouridine synthase TruA family. In terms of assembly, homodimer.

The catalysed reaction is uridine(38/39/40) in tRNA = pseudouridine(38/39/40) in tRNA. Functionally, formation of pseudouridine at positions 38, 39 and 40 in the anticodon stem and loop of transfer RNAs. The protein is tRNA pseudouridine synthase A of Mycobacterium bovis (strain ATCC BAA-935 / AF2122/97).